A 370-amino-acid chain; its full sequence is Pantothenate kinase 3 (370 aa).

Catalysis depends on glutamate 138, which acts as the Proton acceptor. 3 residues coordinate acetyl-CoA: serine 192, serine 195, and arginine 207.

This sequence belongs to the type II pantothenate kinase family. Homodimer. As to expression, highly expressed in the liver.

It localises to the cytoplasm. The catalysed reaction is (R)-pantothenate + ATP = (R)-4'-phosphopantothenate + ADP + H(+). It functions in the pathway cofactor biosynthesis; coenzyme A biosynthesis; CoA from (R)-pantothenate: step 1/5. Its activity is regulated as follows. Subject to allosteric regulation, exists in two distinct conformational states, a catalytically incompetent (or open) conformation stabilized by the binding of acetyl(acyl)-CoA, and a catalytically competent (or closed) conformation stabilized by ATP-binding. Inhibited by acetyl-CoA and its thioesters which act as allosteric inhibitors and compete with the ATP-binding site. Inhibited by sulfonylureas and thiazolidinediones. Activated by oleoylethanolamide, palmitoyl-carnitine and oleoyl-carnitine. In terms of biological role, catalyzes the phosphorylation of pantothenate to generate 4'-phosphopantothenate in the first and rate-determining step of coenzyme A (CoA) synthesis. This is Pantothenate kinase 3 (PANK3) from Homo sapiens (Human).